We begin with the raw amino-acid sequence, 329 residues long: VVSAGLIAGDFVTVLQALPRSEHQVVAVAARDLRRAEEFARTHGIPKAYGSYEELAKDPDVEVAYIGTQHPQHKAAVLLFLAAGKAVLCEKPLGVNAAEVREMVAEARSRGLFLMEAIWTRCFPAVDALKSLLAQGALGDLRVARAEFGENLTQVLRSVDWAQAGGGLLDLGIYCVQFISMVFGGQKPEKISAVGRRYETGVDDTVTVLLQYPGGVHGSFTCSISSKLSNTCSVSGTKGIAQLLEPCWCPTELVVNKERKEFPLAPEENKKFNYRNGMGMSYEAQHVRDCLRKGLKESPVIPLAESQLLADILEEVRKAIGVTFPQDKH.

It belongs to the Gfo/Idh/MocA family. Homodimer. As to expression, lens, liver and small intestine.

It carries out the reaction (1R,2R)-1,2-dihydrobenzene-1,2-diol + NADP(+) = catechol + NADPH + H(+). It catalyses the reaction D-xylose + NADP(+) = D-xylono-1,5-lactone + NADPH + H(+). Its activity is regulated as follows. Stimulated by various salts. This is Trans-1,2-dihydrobenzene-1,2-diol dehydrogenase (DHDH) from Oryctolagus cuniculus (Rabbit).